The primary structure comprises 1391 residues: Periaxin (1391 aa).

The residue at position 7 (Ser7) is a Phosphoserine. Residues 16 to 99 (LVEIIVETEA…YKVSFCLKRT (84 aa)) enclose the PDZ domain. The short motif at 70–84 (VFFENFKYEDALRLL) is the Nuclear export signal element. The Nuclear localization signal signature appears at 118–196 (KGPRAKVAKL…RLQLPRLRVR (79 aa)). Residue Ser243 is modified to Phosphoserine. 12 tandem repeats follow at residues 432–436 (GPEVK), 440–444 (GPEVK), 448–452 (VPEVK), 456–460 (VPEAA), 464–468 (VQLPE), 469–473 (VQLPK), 474–478 (MSDMK), 482–486 (IPEMV), 487–491 (VPDVR), 495–499 (VQLPK), 500–504 (VPEMK), and 508–512 (MKLPK). The tract at residues 432–719 (GPEVKAPTGP…MQVSQVPEVQ (288 aa)) is 45 X 5 AA approximate tandem repeats of [LVMGIED]-[PQSKHARMI]-[EDKLVTR]-[LIVMAP]-[AQKHRPEVSD]; that may have a tripeptide spacer of [LVIDEA]-[PMSVI]-[KEATDQ]. One copy of the 13; approximate repeat lies at 513-517 (WPEMA). Repeat copies occupy residues 521-525 (VHLPD), 526-530 (VQLPK), 534-538 (MKLPK), 539-543 (VPEMA), 547-551 (VHLPD), 552-556 (VQLPK), 560-564 (MKLPE), 565-569 (MKLPK), 573-577 (MAVPD), 578-582 (VRLPE), 583-587 (VQLPK), 591-595 (VKLPK), 596-600 (MPEMA), 601-605 (VPDVH), 609-613 (LQLPK), 614-618 (MSEVK), 619-623 (LPKMP), 627-631 (VPDVR), 632-636 (LPEVQ), 637-641 (LPKVS), 645-649 (LPKMP), 650-654 (EMTMP), 655-659 (DIRLP), 663-667 (LPKVP), 671-675 (LPEMK), 676-680 (LPEIK), 684-688 (VPDMA), 689-693 (VPDVP), 697-701 (LQLPK), 702-706 (VSDIR), 707-711 (LPEMQ), and 715-719 (VPEVQ). 9 positions are modified to phosphoserine: Ser848, Ser979, Ser1028, Ser1279, Ser1283, Ser1285, Ser1293, Ser1331, and Ser1337. Residues 1267-1366 (LPRVGFSQSE…DREEGGFRVR (100 aa)) are disordered. Positions 1275–1285 (SESVSGEGSPS) are enriched in low complexity. Positions 1354-1363 (GSRDREEGGF) are enriched in basic and acidic residues. Ser1369 is subject to Phosphoserine.

Belongs to the periaxin family. In terms of assembly, homodimer (via PDZ domain). Interacts with SCN10A. Found in a complex with SCN10A. Interacts with DRP2. Identified in a dystroglycan complex that contains at least PRX, DRP2, UTRN, DMD and DAG1. Detected in a complex composed of at least EZR, AHNAK, PPL and PRX. Identified in a complex with EZR, AHNAK, BFSP1, BFSP2, ANK2, PLEC, VIM and spectrin. As to expression, detected in myelinating Schwann cells in intramuscular nerves in triangularis sterni. Detected in sciatic nerve. Detected in eye lens fiber cells. Isoform 1 is detected in myelinating Schwann cells in sciatic nerve. Isoform 2 is detected in myelinating Schwann cells in sciatic nerve (at protein level). Detected in sciatic nerve.

It is found in the cell membrane. Its subcellular location is the cell junction. The protein resides in the nucleus. It localises to the cytoplasm. Functionally, scaffolding protein that functions as part of a dystroglycan complex in Schwann cells, and as part of EZR and AHNAK-containing complexes in eye lens fiber cells. Required for the maintenance of the peripheral myelin sheath that is essential for normal transmission of nerve impulses and normal perception of sensory stimuli. Required for normal transport of MBP mRNA from the perinuclear to the paranodal regions. Required for normal remyelination after nerve injury. Required for normal elongation of Schwann cells and normal length of the internodes between the nodes of Ranvier. The demyelinated nodes of Ranvier permit saltatory transmission of nerve impulses; shorter internodes cause slower transmission of nerve impulses. Required for the formation of appositions between the abaxonal surface of the myelin sheath and the Schwann cell plasma membrane; the Schwann cell cytoplasm is restricted to regions between these appositions. Required for the formation of Cajal bands and of Schmidt-Lanterman incisures that correspond to short, cytoplasm-filled regions on myelinated nerves. Recruits DRP2 to the Schwann cell plasma membrane. Required for normal protein composition of the eye lens fiber cell plasma membrane and normal eye lens fiber cell morphology. In Mus musculus (Mouse), this protein is Periaxin (Prx).